Here is a 419-residue protein sequence, read N- to C-terminus: Serine hydroxymethyltransferase (419 aa).

(6S)-5,6,7,8-tetrahydrofolate is bound by residues Leu121 and 125–127 (GHL). Lys229 carries the post-translational modification N6-(pyridoxal phosphate)lysine.

It belongs to the SHMT family. Homodimer. Pyridoxal 5'-phosphate serves as cofactor.

It localises to the cytoplasm. The catalysed reaction is (6R)-5,10-methylene-5,6,7,8-tetrahydrofolate + glycine + H2O = (6S)-5,6,7,8-tetrahydrofolate + L-serine. Its pathway is one-carbon metabolism; tetrahydrofolate interconversion. It functions in the pathway amino-acid biosynthesis; glycine biosynthesis; glycine from L-serine: step 1/1. Functionally, catalyzes the reversible interconversion of serine and glycine with tetrahydrofolate (THF) serving as the one-carbon carrier. This reaction serves as the major source of one-carbon groups required for the biosynthesis of purines, thymidylate, methionine, and other important biomolecules. Also exhibits THF-independent aldolase activity toward beta-hydroxyamino acids, producing glycine and aldehydes, via a retro-aldol mechanism. This Streptomyces griseus subsp. griseus (strain JCM 4626 / CBS 651.72 / NBRC 13350 / KCC S-0626 / ISP 5235) protein is Serine hydroxymethyltransferase.